A 318-amino-acid chain; its full sequence is UDP-N-acetylenolpyruvoylglucosamine reductase (318 aa).

In terms of domain architecture, FAD-binding PCMH-type spans 38-204 (IGGICPVVVE…LGIEILLKEG (167 aa)). Arg-182 is a catalytic residue. The tract at residues 212 to 232 (SLKDKRDRRNSSQPENKKSAG) is disordered. Residues 213–229 (LKDKRDRRNSSQPENKK) are compositionally biased toward basic and acidic residues. Ser-233 (proton donor) is an active-site residue. Glu-310 is an active-site residue.

This sequence belongs to the MurB family. FAD is required as a cofactor.

It is found in the cytoplasm. It carries out the reaction UDP-N-acetyl-alpha-D-muramate + NADP(+) = UDP-N-acetyl-3-O-(1-carboxyvinyl)-alpha-D-glucosamine + NADPH + H(+). The protein operates within cell wall biogenesis; peptidoglycan biosynthesis. Cell wall formation. This Leptospira borgpetersenii serovar Hardjo-bovis (strain JB197) protein is UDP-N-acetylenolpyruvoylglucosamine reductase.